Consider the following 584-residue polypeptide: ATP-dependent lipid A-core flippase (584 aa).

Transmembrane regions (helical) follow at residues 15-35 (LLGY…SMAV), 63-83 (IMWV…AGFI), 153-173 (LGML…CLVV), 251-271 (TGVT…FAGL), and 277-297 (GLTA…FAPV). One can recognise an ABC transmembrane type-1 domain in the interval 27 to 309 (LLSMLSMAVA…ISSVSQAMQR (283 aa)). The ABC transporter domain occupies 341–576 (LSFDAVSFAY…GGLYARLHSL (236 aa)). 375–382 (GSSGSGKT) serves as a coordination point for ATP.

Belongs to the ABC transporter superfamily. Lipid exporter (TC 3.A.1.106) family. As to quaternary structure, homodimer.

The protein resides in the cell inner membrane. The catalysed reaction is ATP + H2O + lipid A-core oligosaccharideSide 1 = ADP + phosphate + lipid A-core oligosaccharideSide 2.. Functionally, involved in lipopolysaccharide (LPS) biosynthesis. Translocates lipid A-core from the inner to the outer leaflet of the inner membrane. Transmembrane domains (TMD) form a pore in the inner membrane and the ATP-binding domain (NBD) is responsible for energy generation. The polypeptide is ATP-dependent lipid A-core flippase (Chromobacterium violaceum (strain ATCC 12472 / DSM 30191 / JCM 1249 / CCUG 213 / NBRC 12614 / NCIMB 9131 / NCTC 9757 / MK)).